The following is a 427-amino-acid chain: Flavohemoprotein (427 aa).

The Globin domain maps to 30–168 (ELNESQKQYI…LAKILIDSEK (139 aa)). A heme b-binding site is contributed by His-114. Active-site charge relay system residues include Tyr-124 and Glu-167. A reductase region spans residues 176–427 (WNGFVEFKVT…QSEFFGPYIP (252 aa)). The region spanning 177 to 285 (NGFVEFKVTE…SPPAGNFVYK (109 aa)) is the FAD-binding FR-type domain. FAD contacts are provided by residues Tyr-216 and 232–235 (REYS). 301–306 (GIGITP) contributes to the NADP(+) binding site. 421–424 (FFGP) is an FAD binding site.

Belongs to the globin family. Two-domain flavohemoproteins subfamily. It in the C-terminal section; belongs to the flavoprotein pyridine nucleotide cytochrome reductase family. FAD is required as a cofactor. The cofactor is heme b.

It localises to the cytoplasm. Its subcellular location is the nucleus. The catalysed reaction is 2 nitric oxide + NADPH + 2 O2 = 2 nitrate + NADP(+) + H(+). It carries out the reaction 2 nitric oxide + NADH + 2 O2 = 2 nitrate + NAD(+) + H(+). Functionally, is involved in NO detoxification in an aerobic process, termed nitric oxide dioxygenase (NOD) reaction that utilizes O(2) and NAD(P)H to convert NO to nitrate, which protects the fungus from various noxious nitrogen compounds. Therefore, plays a central role in the inducible response to nitrosative stress. Its function is as follows. In the presence of oxygen and NADH, it has NADH oxidase activity, which leads to the generation of superoxide and H(2)O(2). Under anaerobic conditions, it also exhibits nitric oxide reductase and FAD reductase activities. However, all these reactions are much lower than NOD activity. This Schizosaccharomyces pombe (strain 972 / ATCC 24843) (Fission yeast) protein is Flavohemoprotein.